We begin with the raw amino-acid sequence, 530 residues long: Equilibrative nucleoside transporter 4 (530 aa).

A disordered region spans residues 1–21 (MGSVGSQRLEEPSVAGTPDPG). The Extracellular portion of the chain corresponds to 1–68 (MGSVGSQRLE…DEPVPDDRYH (68 aa)). Residues 69–89 (AIYFAMLLAGVGFLLPYNSFI) form a helical membrane-spanning segment. Over 90-101 (TDVDYLHHKYPG) the chain is Cytoplasmic. The helical transmembrane segment at 102–122 (TSIVFDMSLTYILVALAAVLL) threads the bilayer. The Extracellular portion of the chain corresponds to 123-139 (NNVLVERLTLHTRITAG). Residues 140–160 (YLLALGPLLFISICDVWLQLF) traverse the membrane as a helical segment. The Cytoplasmic segment spans residues 161 to 166 (SRDQAY). Residues 167–187 (AINLAAVGTVAFGCTVQQSSF) traverse the membrane as a helical segment. Residues 188–231 (YGYTGMLPKRYTQGVMTGESTAGVMISLSRILTKLLLPDERAST) are Extracellular-facing. A helical membrane pass occupies residues 232–252 (LIFFLVSVALELLCFLLHLLV). Over 253–351 (RRSRFVLFYT…LLLHRYVVAR (99 aa)) the chain is Cytoplasmic. Residues 352–372 (VIWADMLSIAVTYFITLCLFP) traverse the membrane as a helical segment. Over 373–381 (GLESEIRHC) the chain is Extracellular. Residues 382–402 (ILGEWLPILIMAVFNLSDFVG) form a helical membrane-spanning segment. The Cytoplasmic segment spans residues 403–416 (KILAALPVDWRGTH). A helical membrane pass occupies residues 417–437 (LLACSCLRVVFIPLFILCVYP). At 438–450 (SGMPALRHPAWPC) the chain is on the extracellular side. A helical transmembrane segment spans residues 451 to 471 (IFSLLMGISNGYFGSVPMILA). The Cytoplasmic portion of the chain corresponds to 472–486 (AGKVSPKQRELAGNT). A helical membrane pass occupies residues 487 to 509 (MTVSYMSGLTLGSAVAYCTYSLT). Topologically, residues 510 to 530 (RDAHGSCLHASTANGSILAGL) are extracellular. N-linked (GlcNAc...) asparagine glycosylation occurs at Asn-523.

The protein belongs to the SLC29A/ENT transporter (TC 2.A.57) family. In terms of processing, N-glycosylated. As to expression, mainly expressed in brain and skeletal muscle. In brain, expressed in cerebellum, cerebral cortex, medulla oblongata, occipital pole, frontal and temporal lobes putamen, spinal cord, substancia nigra, hippocampus, caudate nucleus, nucleus accumbens, pons and choroid plexus. Expressed in heart, in both cardiomyocytes and vascular endothelial cells. Also expressed in adrenal gland, small intestine, pancreas, kidney, liver, bone marrow, lymph node. Located in endometrial stroma, where the expression is high in the proliferative phase, decreases during the secretory phase, and is no longer detectable in the menstrual phase.

It localises to the cell membrane. It is found in the apical cell membrane. The catalysed reaction is serotonin(out) = serotonin(in). It carries out the reaction dopamine(out) = dopamine(in). The enzyme catalyses (R)-noradrenaline(out) = (R)-noradrenaline(in). It catalyses the reaction (R)-adrenaline(out) = (R)-adrenaline(in). The catalysed reaction is histamine(out) = histamine(in). It carries out the reaction tyramine(in) = tyramine(out). The enzyme catalyses guanidine(out) = guanidine(in). It catalyses the reaction adenosine(in) = adenosine(out). Activated at acidic pH. Its function is as follows. Electrogenic voltage-dependent transporter that mediates the transport of a variety of endogenous bioactive amines, cationic xenobiotics and drugs. Utilizes the physiologic inside-negative membrane potential as a driving force to facilitate cellular uptake of organic cations. Functions as a Na(+)- and Cl(-)-independent bidirectional transporter. Substrate transport is pH-dependent and enhanced under acidic condition, which is most likely the result of allosteric changes in the transporter structure. Implicated in monoamine neurotransmitters uptake such as serotonin, dopamine, adrenaline/epinephrine, noradrenaline/norepinephrine, histamine and tyramine, thereby supporting a role in homeostatic regulation of aminergic neurotransmission in the central nervous system. Also responsible for the uptake of bioactive amines and drugs through the blood-cerebrospinal fluid (CSF) barrier, from the CSF into choroid plexus epithelial cells, thereby playing a significant role in the clearance of cationic neurotoxins, xenobiotics and metabolic waste in the brain. Involved in bidirectional transport of the purine nucleoside adenosine and plays a role in the regulation of extracellular adenosine concentrations in cardiac tissues, in particular during ischemia. May be involved in organic cation uptake from the tubular lumen into renal tubular cells, thereby contributing to organic cation reabsorption in the kidney. Also transports guanidine. The protein is Equilibrative nucleoside transporter 4 of Homo sapiens (Human).